Reading from the N-terminus, the 538-residue chain is Bifunctional purine biosynthesis protein PurH (538 aa).

An MGS-like domain is found at 8-158 (FPIPDLHRVR…KNHVYTGVIT (151 aa)).

Belongs to the PurH family.

The enzyme catalyses (6R)-10-formyltetrahydrofolate + 5-amino-1-(5-phospho-beta-D-ribosyl)imidazole-4-carboxamide = 5-formamido-1-(5-phospho-D-ribosyl)imidazole-4-carboxamide + (6S)-5,6,7,8-tetrahydrofolate. The catalysed reaction is IMP + H2O = 5-formamido-1-(5-phospho-D-ribosyl)imidazole-4-carboxamide. The protein operates within purine metabolism; IMP biosynthesis via de novo pathway; 5-formamido-1-(5-phospho-D-ribosyl)imidazole-4-carboxamide from 5-amino-1-(5-phospho-D-ribosyl)imidazole-4-carboxamide (10-formyl THF route): step 1/1. It functions in the pathway purine metabolism; IMP biosynthesis via de novo pathway; IMP from 5-formamido-1-(5-phospho-D-ribosyl)imidazole-4-carboxamide: step 1/1. The polypeptide is Bifunctional purine biosynthesis protein PurH (Bartonella henselae (strain ATCC 49882 / DSM 28221 / CCUG 30454 / Houston 1) (Rochalimaea henselae)).